Consider the following 78-residue polypeptide: MNNPERLPSETHKPITGYLWGGLAVLTCPCHLPILAVVLAGTTAGAFLGEHWVIAALGLTGLFLLSLSRALRAFRERE.

2 consecutive transmembrane segments (helical) span residues 19-39 (LWGG…AVVL) and 45-65 (GAFL…LFLL).

Its subcellular location is the cell inner membrane. Functionally, broad mercury transporter that mediates the transport of both CH(3)Hg(I) and Hg(II) across the membrane. In Pseudomonas aeruginosa, this protein is Broad mercury transporter MerE (merE).